A 428-amino-acid polypeptide reads, in one-letter code: 3-phosphoshikimate 1-carboxyvinyltransferase (428 aa).

The 3-phosphoshikimate site is built by K21, S22, and R26. K21 serves as a coordination point for phosphoenolpyruvate. The phosphoenolpyruvate site is built by G92 and R120. 3-phosphoshikimate contacts are provided by S165, Q167, D313, and K340. Q167 contributes to the phosphoenolpyruvate binding site. Residue D313 is the Proton acceptor of the active site. Phosphoenolpyruvate-binding residues include R344 and R386.

It belongs to the EPSP synthase family. Monomer.

It is found in the cytoplasm. The catalysed reaction is 3-phosphoshikimate + phosphoenolpyruvate = 5-O-(1-carboxyvinyl)-3-phosphoshikimate + phosphate. It participates in metabolic intermediate biosynthesis; chorismate biosynthesis; chorismate from D-erythrose 4-phosphate and phosphoenolpyruvate: step 6/7. Functionally, catalyzes the transfer of the enolpyruvyl moiety of phosphoenolpyruvate (PEP) to the 5-hydroxyl of shikimate-3-phosphate (S3P) to produce enolpyruvyl shikimate-3-phosphate and inorganic phosphate. This chain is 3-phosphoshikimate 1-carboxyvinyltransferase, found in Carboxydothermus hydrogenoformans (strain ATCC BAA-161 / DSM 6008 / Z-2901).